The primary structure comprises 470 residues: Putative multidrug resistance protein MdtD (470 aa).

The Periplasmic portion of the chain corresponds to 1–11 (MTELPDNTRWQ). The helical transmembrane segment at 12–32 (LWIVALGFFMQSLDTTIVNTA) threads the bilayer. The Cytoplasmic segment spans residues 33–48 (LPSMAKSLGESPLHMH). Residues 49 to 69 (MVVVSYVLTVAVMLPASGWLA) form a helical membrane-spanning segment. Residues 70-76 (DKIGVRN) lie on the Periplasmic side of the membrane. Residues 77 to 97 (IFFAAIVLFTLGSLFCALSGT) form a helical membrane-spanning segment. Residues 98 to 101 (LNQL) are Cytoplasmic-facing. Residues 102-124 (VLARVLQGVGGAMMVPVGRLTVM) form a helical membrane-spanning segment. Over 125 to 137 (KIVPRAQYMAAMT) the chain is Periplasmic. The chain crosses the membrane as a helical span at residues 138 to 158 (FVTLPGQIGPLLGPALGGVLV). At 159–164 (EYASWH) the chain is on the cytoplasmic side. A helical transmembrane segment spans residues 165–185 (WIFLINIPVGIVGAMATFMLM). The Periplasmic portion of the chain corresponds to 186–196 (PNYTIETRRFD). A helical transmembrane segment spans residues 197–217 (LPGFLLLAIGMAVLTLALDGS). Topologically, residues 218–221 (KSMG) are cytoplasmic. Residues 222–242 (ISPWTLAGLAAGGAAAILLYL) form a helical membrane-spanning segment. Residues 243–262 (LHAKKNSGALFSLRLFRTPT) lie on the Periplasmic side of the membrane. The helical transmembrane segment at 263 to 283 (FSLGLLGSFAGRIGSGMLPFM) threads the bilayer. Topologically, residues 284-285 (TP) are cytoplasmic. The chain crosses the membrane as a helical span at residues 286–306 (VFLQIGLGFSPFHAGLMMIPM). Topologically, residues 307 to 341 (VLGSMGMKRIVVQIVNRFGYRRVLVATTLGLALVS) are periplasmic. A helical membrane pass occupies residues 342 to 362 (LLFMSVALLGWYYLLPLVLLL). Residues 363 to 395 (QGMVNSARFSSMNTLTLKDLPDTLASSGNSLLS) are Cytoplasmic-facing. Residues 396 to 416 (MIMQLSMSIGVTIAGMLLGMF) form a helical membrane-spanning segment. Over 417-430 (GQQHIGIDSSATHH) the chain is Periplasmic. Residues 431 to 451 (VFMYTWLCMAVIIALPAIIFA) traverse the membrane as a helical segment. The Cytoplasmic segment spans residues 452-470 (RVPNDTQQNMVISRRKRSL).

This sequence belongs to the major facilitator superfamily. TCR/Tet family.

It is found in the cell inner membrane. This chain is Putative multidrug resistance protein MdtD, found in Salmonella heidelberg (strain SL476).